The primary structure comprises 104 residues: Large ribosomal subunit protein uL24 (104 aa).

The protein belongs to the universal ribosomal protein uL24 family. Part of the 50S ribosomal subunit.

In terms of biological role, one of two assembly initiator proteins, it binds directly to the 5'-end of the 23S rRNA, where it nucleates assembly of the 50S subunit. Its function is as follows. One of the proteins that surrounds the polypeptide exit tunnel on the outside of the subunit. This Bartonella bacilliformis (strain ATCC 35685 / KC583 / Herrer 020/F12,63) protein is Large ribosomal subunit protein uL24.